The sequence spans 1922 residues: Kinesin-related protein 4 (1922 aa).

Residues 22–343 form the Kinesin motor domain; it reads KIKVAIRVRP…LQFAKRAKRV (322 aa). 101 to 108 provides a ligand contact to ATP; it reads GQTSSGKT. A disordered region spans residues 448 to 538; sequence QKIKKIKNSE…DDEFKDNLNL (91 aa). The span at 456-468 shows a compositional bias: low complexity; the sequence is SENNISSSSSNSS. Composition is skewed to acidic residues over residues 469–480 and 488–532; these read GEEDDDDKDDEN and DKDD…DDEF. The stretch at 562-1712 forms a coiled coil; it reads QVKVKREDLD…ELESTKQKNL (1151 aa). The disordered stretch occupies residues 1887 to 1922; the sequence is TSTDNLTTTSTSLKSKSSSNGENKENQNNNIIIKNN.

This sequence belongs to the TRAFAC class myosin-kinesin ATPase superfamily. Kinesin family.

It localises to the cytoplasm. Its subcellular location is the cytoskeleton. In terms of biological role, microtubule-associated force-producing protein that plays a role in organelle transport. Its motor activity is directed toward the microtubule's plus end. Cooperates with dynein in organizing spindle assembly during cell division. The chain is Kinesin-related protein 4 (kif4) from Dictyostelium discoideum (Social amoeba).